The following is a 90-amino-acid chain: Phaiodotoxin (90 aa).

The first 18 residues, 1 to 18, serve as a signal peptide directing secretion; sequence MKTIPLLFLLFIYFECDG. In terms of domain architecture, LCN-type CS-alpha/beta spans 19 to 90; the sequence is KFIRHKDESF…CFGALESKCA (72 aa). 4 cysteine pairs are disulfide-bonded: C31–C56, C41–C68, C45–C70, and C81–C89.

As to expression, expressed by the venom gland.

The protein localises to the secreted. Its function is as follows. Sodium channel (Nav) specific neurotoxin. Causes impairment of movement and mild paralysis in crickets at a dose of 0.5 ug per animal. A dose of 0.8 ug per cricket causes clear flaccid paralysis. A dose of 1.0 ug per cricket causes death within 2 hours. Is not toxic to mice at a dose of 100 ug per 20 g mouse weight. The sequence is that of Phaiodotoxin from Anuroctonus phaiodactylus (Mafia scorpion).